The sequence spans 632 residues: tRNA uridine 5-carboxymethylaminomethyl modification enzyme MnmG (632 aa).

13 to 18 (GGGHAG) lines the FAD pocket. 274–288 (GPRYCPSIEDKVMRF) serves as a coordination point for NAD(+).

The protein belongs to the MnmG family. As to quaternary structure, homodimer. Heterotetramer of two MnmE and two MnmG subunits. FAD serves as cofactor.

It is found in the cytoplasm. Functionally, NAD-binding protein involved in the addition of a carboxymethylaminomethyl (cmnm) group at the wobble position (U34) of certain tRNAs, forming tRNA-cmnm(5)s(2)U34. This chain is tRNA uridine 5-carboxymethylaminomethyl modification enzyme MnmG, found in Dichelobacter nodosus (strain VCS1703A).